The sequence spans 345 residues: Phosphoribosylformylglycinamidine cyclo-ligase (345 aa).

This sequence belongs to the AIR synthase family.

It is found in the cytoplasm. It catalyses the reaction 2-formamido-N(1)-(5-O-phospho-beta-D-ribosyl)acetamidine + ATP = 5-amino-1-(5-phospho-beta-D-ribosyl)imidazole + ADP + phosphate + H(+). It participates in purine metabolism; IMP biosynthesis via de novo pathway; 5-amino-1-(5-phospho-D-ribosyl)imidazole from N(2)-formyl-N(1)-(5-phospho-D-ribosyl)glycinamide: step 2/2. The chain is Phosphoribosylformylglycinamidine cyclo-ligase from Synechococcus sp. (strain CC9902).